The chain runs to 1008 residues: MSSRQDKEKSVNVQVLLRCRPFSDDEVRSNAPQVITCNDYQREVAVTQTIAGKQIDRVFTFDKVFGPTAKQRDLYDQAIIPIVNEVLEGFNCTIFAYGQTGTGKTYTMEGECRRAKSGPKGQLPADAGVIPRAVKQIFDTLESQNTEYSVKVTFLELYNEEITDLLAPEEISKAALEERQKKPLPLMEDGKGGVLVRGLEEEIVTNASEIFSLLERGSAKRRTAETLLNKQSSRSHSLFSITIHIKEATPEGEELIKCGKLNLVDLAGSENISRSGAREGRAREAGEINKSLLTLGRVITALVEHLGHVPYRDSKLTRLLRDSLGGRTKTCIIATVSPSVHCLEETLSTLDYAHRAKSIKNRPEVNQKMMKSTLIKDLYGEIDRLKAEVYAAREKVGVYIPKDRYQQEENERKAMADQIEQMTTSLEANQKQINDLQEKYDSELQHSADLSKKLEATEKCLDHTSNLLSTTKEDLKQAQYNLKEKDYIISEQRKAENALIQQACLLRSDLEKSNRENAALYSKIARGDKLNAANRSVVNSFQADLASKLDILSTTLATSIDQQNKHLKSVENLCKSCVDSHDTATSEIKKKILASKALYMSHMEAFQNVVLLHKANSNSTLEDISSLSAASCCSLDQLLACVEGEAQKIFGDIQNLLADHRSEVAHFTQELRESFRISLDRTKDMSSFILGLFDKYVEETSKLQSHSNHTHEAQVKSLEDFQKAYEEQSKSEEQKLLADITSLVSKHVTRQRELVGGRLNSLGDAARGNKAFLDEHTSAMEVVTKDAKRKWEMFAEQAENDCKVGSNFSAAKHCRMETILQECACTVDTAAQQWKASHATVNDLCRKQIAEVEALVRSAIETNEQHEAEIASSRATAEEHASNSSKDLLQDVDNMLQEARNSSSRVVSTVEAHLGESQHLQESHSSHTAGINTHADNAFQSSYKDYEPTGETPVRSEPEVPSKDAIESLRAMPMESLMDEFRENHPYEPSKDRRPSLIPRSPLATINN.

Positions 12–359 (NVQVLLRCRP…LDYAHRAKSI (348 aa)) constitute a Kinesin motor domain. 98-105 (GQTGTGKT) lines the ATP pocket. Residues 402–459 (KDRYQQEENERKAMADQIEQMTTSLEANQKQINDLQEKYDSELQHSADLSKKLEATEK) are a coiled coil. 3 disordered regions span residues 910-931 (VEAH…TAGI), 943-962 (YKDY…EVPS), and 975-1008 (ESLM…TINN). Basic and acidic residues predominate over residues 913–925 (HLGESQHLQESHS). The segment covering 979–995 (DEFRENHPYEPSKDRRP) has biased composition (basic and acidic residues).

This sequence belongs to the TRAFAC class myosin-kinesin ATPase superfamily. Kinesin family. KIN-5/BimC subfamily.

The protein localises to the cytoplasm. Its subcellular location is the cytoskeleton. The protein resides in the spindle. Functionally, responsible for microtubule translocation. May be important for the organization of phragmoplast-specific arrays of microtubules. Plays an essential role in stabilizing the mitotic spindle. Required during mitotic cytokinesis. In Oryza sativa subsp. japonica (Rice), this protein is Kinesin-like protein KIN-5C.